The primary structure comprises 79 residues: MNGGAPTKIANFLHKSIVSVLALTSLGCGVFVISATADLLERRKKRREEEDRIINEFIENDKKRILEENLRQQQQQQQK.

The chain crosses the membrane as a helical span at residues 15-37 (KSIVSVLALTSLGCGVFVISATA).

The protein resides in the membrane. This is an uncharacterized protein from Dictyostelium discoideum (Social amoeba).